We begin with the raw amino-acid sequence, 460 residues long: Nuclear distribution protein PAC1 (460 aa).

Residues 9–41 (QAEELHKSIIAYLAANNLQDSANAMRTELGLGE) enclose the LisH domain. The stretch at 61 to 88 (TSVVRLQKKIMDLEAQTQTLQTELNSAT) forms a coiled coil. Polar residues predominate over residues 82–92 (TELNSATPTSN). Positions 82 to 105 (TELNSATPTSNRRGDPSSWLPAGP) are disordered. WD repeat units lie at residues 112–153 (SHRT…RTVK), 155–195 (HTKA…QNIR), 199–246 (GHDH…CVKT), 249–288 (GHAD…PEAK), 293–354 (GHEH…KTLI), 355–394 (GHDN…KCVK), and 399–456 (SHEH…MSLR). The segment at 414-433 (IKDKGPGEETNGDVGTPKKA) is disordered.

This sequence belongs to the WD repeat LIS1/nudF family. In terms of assembly, self-associates. Interacts with NDL1 and dynein.

It localises to the cytoplasm. Its subcellular location is the cytoskeleton. The protein localises to the spindle pole. Its function is as follows. Positively regulates the activity of the minus-end directed microtubule motor protein dynein. May enhance dynein-mediated microtubule sliding by targeting dynein to the microtubule plus end. Required for nuclear migration during vegetative growth as well as development. Required for retrograde early endosome (EE) transport from the hyphal tip. Required for localization of dynein to the mitotic spindle poles. Recruits additional proteins to the dynein complex at SPBs. The protein is Nuclear distribution protein PAC1 of Gibberella zeae (strain ATCC MYA-4620 / CBS 123657 / FGSC 9075 / NRRL 31084 / PH-1) (Wheat head blight fungus).